The primary structure comprises 491 residues: MNNTAPGLLHQPKPFFMIFFVELWERFGYYGVQGILAVFFVKQLGFSQEQAFITFGAFAALVYGLISIGGYVGDHLLGTKRTMVLGAIVLALGYFMTGMSLLKPEMIFIALGTIAVGNGLFKANPASLLSKCYPPKDPRLDGAFTLFYMSINIGSLLSLSLAPIIAERFGYAVTYNLCGLGLIIALLVYFACRGMVRSIGSAPDHQPLNYGKLLLVLAGAVVMIFLCAWLMHNVGVANIVLIAVSAVVLYFFFREAFKQDKTGRNRMFVAFILMIEAVLFYILYAQMPTSLNFFAINNVRHELLGFAINPVSFQALNPFWVVVASPILASIYTRLGSRGRDMTMPTKFTLGMLLCSLGFLTAAAAGMWFADAQGLTSPWFVVLVYLFQSLGELMISALGLAMVAALVPQYLMGFILGMWFLTQAAAFLLGGYVATFTAVPAGIHDPLQTLPIYTGVFGKIGIATLIVTLVMAAMVPWLNRMMNTPADGQKA.

Residues 1–26 (MNNTAPGLLHQPKPFFMIFFVELWER) lie on the Cytoplasmic side of the membrane. The helical transmembrane segment at 27–47 (FGYYGVQGILAVFFVKQLGFS) threads the bilayer. Residues 48–51 (QEQA) lie on the Periplasmic side of the membrane. The helical transmembrane segment at 52 to 72 (FITFGAFAALVYGLISIGGYV) threads the bilayer. Over 73–81 (GDHLLGTKR) the chain is Cytoplasmic. A helical transmembrane segment spans residues 82 to 102 (TMVLGAIVLALGYFMTGMSLL). The Periplasmic portion of the chain corresponds to 103-105 (KPE). A helical transmembrane segment spans residues 106–126 (MIFIALGTIAVGNGLFKANPA). Over 127 to 145 (SLLSKCYPPKDPRLDGAFT) the chain is Cytoplasmic. A helical membrane pass occupies residues 146–166 (LFYMSINIGSLLSLSLAPIIA). Residues 167–171 (ERFGY) are Periplasmic-facing. A helical transmembrane segment spans residues 172–192 (AVTYNLCGLGLIIALLVYFAC). Residues 193–210 (RGMVRSIGSAPDHQPLNY) are Cytoplasmic-facing. The chain crosses the membrane as a helical span at residues 211–231 (GKLLLVLAGAVVMIFLCAWLM). Residue histidine 232 is a topological domain, periplasmic. Residues 233–253 (NVGVANIVLIAVSAVVLYFFF) traverse the membrane as a helical segment. Topologically, residues 254–266 (REAFKQDKTGRNR) are cytoplasmic. Residues 267-287 (MFVAFILMIEAVLFYILYAQM) traverse the membrane as a helical segment. Residues 288–312 (PTSLNFFAINNVRHELLGFAINPVS) are Periplasmic-facing. The helical transmembrane segment at 313–335 (FQALNPFWVVVASPILASIYTRL) threads the bilayer. At 336–349 (GSRGRDMTMPTKFT) the chain is on the cytoplasmic side. The helical transmembrane segment at 350-370 (LGMLLCSLGFLTAAAAGMWFA) threads the bilayer. Topologically, residues 371-378 (DAQGLTSP) are periplasmic. A helical transmembrane segment spans residues 379–399 (WFVVLVYLFQSLGELMISALG). Residues 400–423 (LAMVAALVPQYLMGFILGMWFLTQ) are Cytoplasmic-facing. Residues 424-444 (AAAFLLGGYVATFTAVPAGIH) form a helical membrane-spanning segment. The Periplasmic portion of the chain corresponds to 445-454 (DPLQTLPIYT). A helical transmembrane segment spans residues 455 to 475 (GVFGKIGIATLIVTLVMAAMV). Residues 476–491 (PWLNRMMNTPADGQKA) lie on the Cytoplasmic side of the membrane.

This sequence belongs to the major facilitator superfamily. Proton-dependent oligopeptide transporter (POT/PTR) (TC 2.A.17) family. DtpB subfamily.

The protein resides in the cell inner membrane. Proton-dependent permease that transports di- and tripeptides. The polypeptide is Dipeptide and tripeptide permease B (Edwardsiella piscicida).